Reading from the N-terminus, the 776-residue chain is Photosystem I P700 chlorophyll a apoprotein A1 (776 aa).

8 consecutive transmembrane segments (helical) span residues Ile-76 to Ala-99, Leu-162 to His-185, Leu-201 to Asn-225, Val-309 to Tyr-327, Trp-368 to Tyr-391, Leu-407 to Ile-433, Ala-455 to His-477, and Leu-557 to Leu-575. [4Fe-4S] cluster contacts are provided by Cys-599 and Cys-608. 2 consecutive transmembrane segments (helical) span residues His-615–Trp-636 and Leu-690–Phe-712. His-701 contributes to the divinylchlorophyll a' binding site. Divinyl chlorophyll a is bound by residues Met-709 and Tyr-717. Residue Trp-718 participates in phylloquinone binding. The helical transmembrane segment at Ala-750–Ala-770 threads the bilayer.

It belongs to the PsaA/PsaB family. The PsaA/B heterodimer binds the P700 chlorophyll special pair and subsequent electron acceptors. PSI consists of a core antenna complex that captures photons, and an electron transfer chain that converts photonic excitation into a charge separation. The cyanobacterial PSI reaction center is composed of one copy each of PsaA,B,C,D,E,F,I,J,K,L,M and X, and forms trimeric complexes. PSI electron transfer chain: 5 divinyl chlorophyll a, 1 divinyl chlorophyll a', 2 phylloquinones and 3 4Fe-4S clusters. PSI core antenna: 90 divinyl chlorophyll a, 22 carotenoids, 3 phospholipids and 1 galactolipid. P700 is a divinyl chlorophyll a/divinyl chlorophyll a' dimer, A0 is one or more chlorophyll divinyl a, A1 is one or both phylloquinones and FX is a shared 4Fe-4S iron-sulfur center. serves as cofactor.

The protein resides in the cellular thylakoid membrane. The enzyme catalyses reduced [plastocyanin] + hnu + oxidized [2Fe-2S]-[ferredoxin] = oxidized [plastocyanin] + reduced [2Fe-2S]-[ferredoxin]. In terms of biological role, psaA and PsaB bind P700, the primary electron donor of photosystem I (PSI), as well as the electron acceptors A0, A1 and FX. PSI is a plastocyanin/cytochrome c6-ferredoxin oxidoreductase, converting photonic excitation into a charge separation, which transfers an electron from the donor P700 chlorophyll pair to the spectroscopically characterized acceptors A0, A1, FX, FA and FB in turn. Oxidized P700 is reduced on the lumenal side of the thylakoid membrane by plastocyanin or cytochrome c6. The protein is Photosystem I P700 chlorophyll a apoprotein A1 of Prochlorococcus marinus (strain MIT 9313).